The chain runs to 321 residues: Cytochrome c biogenesis protein CcsA (321 aa).

The next 8 helical transmembrane spans lie at 1–21 (MIFITLEHILAHISFSLISVV), 36–56 (LSSSGGKGMIVTFVCTTGLLI), 70–90 (LYESFMFLSWSSSVIHIILEV), 97–117 (GLGAITAPSTMLTHGFATSGL), 143–163 (ILLSYATLLCGSLSSIAFLII), 229–249 (VIGLGFLLLTIGILSGAVWAN), 256–276 (WSWDPKETWALITWIIFAIYL), and 290–310 (AIIASLGSFIVWICYLGVDLL).

The protein belongs to the CcmF/CycK/Ccl1/NrfE/CcsA family. In terms of assembly, may interact with Ccs1.

The protein resides in the plastid. Its subcellular location is the chloroplast thylakoid membrane. Required during biogenesis of c-type cytochromes (cytochrome c6 and cytochrome f) at the step of heme attachment. This Cycas taitungensis (Prince sago) protein is Cytochrome c biogenesis protein CcsA.